The sequence spans 102 residues: Glutaredoxin 1 (102 aa).

One can recognise a Glutaredoxin domain in the interval 1-96 (MNKAILHTII…KLLENQPKTT (96 aa)). C17 and C20 are joined by a disulfide.

Belongs to the glutaredoxin family. As to quaternary structure, monomer.

Its subcellular location is the cytoplasm. In terms of biological role, has a glutathione-disulfide oxidoreductase activity in the presence of NADPH and glutathione reductase. Reduces low molecular weight disulfides and proteins. This Rickettsia conorii (strain ATCC VR-613 / Malish 7) protein is Glutaredoxin 1 (grxC1).